The primary structure comprises 471 residues: Sulfate adenylyltransferase subunit 1 (471 aa).

The tr-type G domain occupies 22 to 237 (KELLRFLTCG…LESVQITGAK (216 aa)). The interval 31–38 (GSVDDGKS) is G1. 31–38 (GSVDDGKS) is a binding site for GTP. A G2 region spans residues 89-93 (GITID). The interval 110–113 (DTPG) is G3. Residues 110-114 (DTPGH) and 165-168 (NKMD) contribute to the GTP site. The G4 stretch occupies residues 165–168 (NKMD). The tract at residues 202–204 (SAL) is G5.

It belongs to the TRAFAC class translation factor GTPase superfamily. Classic translation factor GTPase family. CysN/NodQ subfamily. In terms of assembly, heterodimer composed of CysD, the smaller subunit, and CysN.

It catalyses the reaction sulfate + ATP + H(+) = adenosine 5'-phosphosulfate + diphosphate. The protein operates within sulfur metabolism; hydrogen sulfide biosynthesis; sulfite from sulfate: step 1/3. In terms of biological role, with CysD forms the ATP sulfurylase (ATPS) that catalyzes the adenylation of sulfate producing adenosine 5'-phosphosulfate (APS) and diphosphate, the first enzymatic step in sulfur assimilation pathway. APS synthesis involves the formation of a high-energy phosphoric-sulfuric acid anhydride bond driven by GTP hydrolysis by CysN coupled to ATP hydrolysis by CysD. The polypeptide is Sulfate adenylyltransferase subunit 1 (Saccharophagus degradans (strain 2-40 / ATCC 43961 / DSM 17024)).